Consider the following 490-residue polypeptide: Glucose-6-phosphate 1-dehydrogenase (490 aa).

Residues R48, 90 to 91 (DI), and K145 contribute to the NADP(+) site. Residues H175, K179, E213, and D232 each contribute to the substrate site. Residue H237 is the Proton acceptor of the active site. Positions 340 and 345 each coordinate substrate.

The protein belongs to the glucose-6-phosphate dehydrogenase family.

The catalysed reaction is D-glucose 6-phosphate + NADP(+) = 6-phospho-D-glucono-1,5-lactone + NADPH + H(+). It participates in carbohydrate degradation; pentose phosphate pathway; D-ribulose 5-phosphate from D-glucose 6-phosphate (oxidative stage): step 1/3. Its function is as follows. Catalyzes the oxidation of glucose 6-phosphate to 6-phosphogluconolactone. This is Glucose-6-phosphate 1-dehydrogenase from Buchnera aphidicola subsp. Baizongia pistaciae (strain Bp).